The following is a 283-amino-acid chain: Pantothenate synthetase (283 aa).

ATP is bound at residue 34-41; sequence MGALHDGH. H41 (proton donor) is an active-site residue. Position 65 (Q65) interacts with (R)-pantoate. Q65 is a beta-alanine binding site. 152 to 155 contributes to the ATP binding site; it reads GEKD. Q158 serves as a coordination point for (R)-pantoate. Residues V181 and 189–192 contribute to the ATP site; that span reads MSSR.

It belongs to the pantothenate synthetase family. In terms of assembly, homodimer.

The protein localises to the cytoplasm. It carries out the reaction (R)-pantoate + beta-alanine + ATP = (R)-pantothenate + AMP + diphosphate + H(+). It participates in cofactor biosynthesis; (R)-pantothenate biosynthesis; (R)-pantothenate from (R)-pantoate and beta-alanine: step 1/1. Catalyzes the condensation of pantoate with beta-alanine in an ATP-dependent reaction via a pantoyl-adenylate intermediate. This Bradyrhizobium sp. (strain BTAi1 / ATCC BAA-1182) protein is Pantothenate synthetase.